We begin with the raw amino-acid sequence, 400 residues long: Phosphoglycerate kinase (400 aa).

Substrate contacts are provided by residues 19-21, arginine 38, 61-64, arginine 124, and arginine 161; these read DLN and HLGR. ATP is bound by residues lysine 211, glycine 299, glutamate 330, and 356–359; that span reads GGDS.

This sequence belongs to the phosphoglycerate kinase family. In terms of assembly, monomer.

It localises to the cytoplasm. The enzyme catalyses (2R)-3-phosphoglycerate + ATP = (2R)-3-phospho-glyceroyl phosphate + ADP. Its pathway is carbohydrate degradation; glycolysis; pyruvate from D-glyceraldehyde 3-phosphate: step 2/5. The chain is Phosphoglycerate kinase from Frankia casuarinae (strain DSM 45818 / CECT 9043 / HFP020203 / CcI3).